The following is an 813-amino-acid chain: Serine/threonine-protein kinase kin-29 (813 aa).

The region spanning 18–269 (YDVGRAIGKG…IQNVLAHRWM (252 aa)) is the Protein kinase domain. ATP contacts are provided by residues 24-32 (IGKGNFATV) and lysine 47. Aspartate 140 acts as the Proton acceptor in catalysis. Positions 383 to 412 (LSSPDCDSDDSSNSDLCDESPLSSLEPNHK) are disordered. Residues 388 to 400 (CDSDDSSNSDLCD) are compositionally biased toward acidic residues.

The protein belongs to the protein kinase superfamily. CAMK Ser/Thr protein kinase family. SNF1 subfamily. Interacts with tax-6. Mg(2+) serves as cofactor. In terms of processing, autophosphorylated. Elevated cAMP levels appears to act via PKA to directly or indirectly phosphorylate multiple sites on kin-29 and inhibit function.

It localises to the cytoplasm. It is found in the nucleus. It catalyses the reaction L-seryl-[protein] + ATP = O-phospho-L-seryl-[protein] + ADP + H(+). The catalysed reaction is L-threonyl-[protein] + ATP = O-phospho-L-threonyl-[protein] + ADP + H(+). In terms of biological role, regulates chemoreceptor expression by phosphorylating the hda-4 class II histone deacetylase (HDAC) and inhibiting the gene repression functions of hda-4 and the mef-2 transcription factor, enabling the correct sensing and transduction of food signals. Role in determining body size, the dauer decision and serotonin-mediated egg laying. May modulate the Sma/Mab pathway and regulates development in the later larval stages. The sequence is that of Serine/threonine-protein kinase kin-29 from Caenorhabditis briggsae.